The primary structure comprises 130 residues: Large ribosomal subunit protein bL12c (130 aa).

It belongs to the bacterial ribosomal protein bL12 family. In terms of assembly, homodimer. Part of the ribosomal stalk of the 50S ribosomal subunit. Forms a multimeric L10(L12)X complex, where L10 forms an elongated spine to which 2 to 4 L12 dimers bind in a sequential fashion. Binds GTP-bound translation factors.

It is found in the plastid. It localises to the chloroplast. In terms of biological role, forms part of the ribosomal stalk which helps the ribosome interact with GTP-bound translation factors. Is thus essential for accurate translation. This is Large ribosomal subunit protein bL12c from Cyanidium caldarium (Red alga).